Here is a 136-residue protein sequence, read N- to C-terminus: Large ribosomal subunit protein bL19 (136 aa).

Belongs to the bacterial ribosomal protein bL19 family.

In terms of biological role, this protein is located at the 30S-50S ribosomal subunit interface and may play a role in the structure and function of the aminoacyl-tRNA binding site. This chain is Large ribosomal subunit protein bL19, found in Xylella fastidiosa (strain M23).